A 369-amino-acid chain; its full sequence is MSRLLGGTLERVCKAVLLLCLLHFLVAVILYFDVYAQHLAFFSRFSIRSPAHALYPAASSSTNCSRPNATASSSGLPEVPSARPGPTAPVIPPCPDVPPGLVGRVVIEFTSPMPLERVQRENPGVLLGGRYTPPDCTPAQTVAVIIPFRHREHHLRYWLHYLHPMLRRQRLRYGIYVINQHGEETFNRAKLLNVGFLEALKEDATYDCFIFSDVDLVPMDDRNLYRCGDQPRHFAIAMDKFGFRLPYASYFGGVSGLSKAQFLRINGFPNEYWGWGGEDDDIFNRISLTGMKISRPDVRIGRYRMIKHDRDKHNEPNPQRFSKIQNTKLSMKWDGIGSLRYRVLEVSRQPLFTNITVDIGRPMSWLNQG.

Residues 1–15 lie on the Cytoplasmic side of the membrane; it reads MSRLLGGTLERVCKA. Residues 16–36 traverse the membrane as a helical; Signal-anchor for type II membrane protein segment; that stretch reads VLLLCLLHFLVAVILYFDVYA. The Lumenal segment spans residues 37-369; sequence QHLAFFSRFS…GRPMSWLNQG (333 aa). Positions 59 to 75 are enriched in polar residues; it reads SSSTNCSRPNATASSSG. Positions 59 to 90 are disordered; that stretch reads SSSTNCSRPNATASSSGLPEVPSARPGPTAPV. N-linked (GlcNAc...) asparagine glycans are attached at residues asparagine 63 and asparagine 68. A disulfide bridge connects residues cysteine 94 and cysteine 136. Residues 147 to 151, 186 to 188, 214 to 215, and tryptophan 275 contribute to the UDP-alpha-D-galactose site; these read PFRHR, FNR, and VD. A disulfide bridge links cysteine 208 with cysteine 227. Aspartate 215 is a binding site for Mn(2+). An N-acetyl-D-glucosamine-binding site is contributed by 277–280; that stretch reads GEDD. Histidine 308 contributes to the Mn(2+) binding site. Residue 308–310 participates in UDP-alpha-D-galactose binding; the sequence is HDR. Arginine 320 contacts N-acetyl-D-glucosamine. Asparagine 354 carries an N-linked (GlcNAc...) asparagine glycan.

Belongs to the glycosyltransferase 7 family. Requires Mn(2+) as cofactor.

The protein localises to the golgi apparatus. It localises to the golgi stack membrane. It carries out the reaction D-glucose + UDP-alpha-D-galactose = lactose + UDP + H(+). It catalyses the reaction an N-acetyl-beta-D-glucosaminyl derivative + UDP-alpha-D-galactose = a beta-D-galactosyl-(1-&gt;4)-N-acetyl-beta-D-glucosaminyl derivative + UDP + H(+). The enzyme catalyses N-acetyl-D-glucosamine + UDP-alpha-D-galactose = beta-D-galactosyl-(1-&gt;4)-N-acetyl-D-glucosamine + UDP + H(+). Its pathway is protein modification; protein glycosylation. Functionally, responsible for the synthesis of complex-type N-linked oligosaccharides in many glycoproteins as well as the carbohydrate moieties of glycolipids. Can produce lactose. This is Beta-1,4-galactosyltransferase 2 (B4GALT2) from Cricetulus griseus (Chinese hamster).